Consider the following 109-residue polypeptide: Glutaredoxin 4 (109 aa).

In terms of domain architecture, Glutaredoxin spans 4–106 (LDKIKKQISE…TLLADVAAKY (103 aa)). Residue Lys21 participates in glutathione binding. Cys29 contacts [2Fe-2S] cluster. Residues Arg58, Phe70, and 83 to 84 (CD) each bind glutathione.

This sequence belongs to the glutaredoxin family. Monothiol subfamily. As to quaternary structure, homodimer.

The protein resides in the cytoplasm. Functionally, monothiol glutaredoxin involved in the biogenesis of iron-sulfur clusters. This chain is Glutaredoxin 4 (grxD), found in Pasteurella multocida (strain Pm70).